We begin with the raw amino-acid sequence, 183 residues long: Inner membrane-spanning protein YciB (183 aa).

The next 5 helical transmembrane spans lie at Leu19–Val39, Ile53–Phe73, Trp76–Phe96, Leu121–Phe141, and Thr151–Pro171.

Belongs to the YciB family.

It is found in the cell inner membrane. Its function is as follows. Plays a role in cell envelope biogenesis, maintenance of cell envelope integrity and membrane homeostasis. This chain is Inner membrane-spanning protein YciB, found in Actinobacillus pleuropneumoniae serotype 3 (strain JL03).